Here is a 315-residue protein sequence, read N- to C-terminus: Eukaryotic translation initiation factor 2 subunit 1 (315 aa).

The S1 motif domain occupies 17 to 88 (EDVVMVNVRS…EKGYIDLSKR (72 aa)). At Ser-49 the chain carries Phosphoserine; by HRI. The residue at position 52 (Ser-52) is a Phosphoserine. N6-acetyllysine is present on Lys-141. Position 158 is a phosphoserine (Ser-158). Phosphothreonine occurs at positions 279 and 281. Residues 293–315 (LERENAEVDGDDDAEEMEAKAED) are disordered. Over residues 299-308 (EVDGDDDAEE) the composition is skewed to acidic residues.

Belongs to the eIF-2-alpha family. Eukaryotic translation initiation factor 2 eIF2 is a heterotrimeric complex composed of an alpha (EIF2S1), a beta (EIF2S2) and a gamma (EIF2S3) chain. eIF2 is member of the 43S pre-initiation complex (43S PIC). eIF2 forms a complex with at least CELF1/CUGBP1, CALR, CALR3, EIF2S1, EIF2S2, HSP90B1 and HSPA5. Interaction with METAP2 protects EIF2S1 from inhibitory phosphorylation. Interacts with ABCF1 isoform 2. Associates with ribosomes. Interacts with DDX3X in an RNA-independent manner. Interacts with CDC123. As to quaternary structure, (Microbial infection) Interacts with rotavirus A non-structural protein 2; this interaction probably plays a role in the sequestration of IF2A in viral factories. Interacts with rotavirus A non-structural protein 5; this interaction probably plays a role in its sequestration in viral factories. Post-translationally, phosphorylation at Ser-49 and Ser-52 stabilizes the eIF-2/GDP/eIF2B complex and prevents GDP/GTP exchange reaction, thus impairing the recycling of eIF-2 between successive rounds of initiation and leading to global inhibition of translation, while concomitantly initiating the preferential translation of integrated stress response (ISR)-specific mRNAs. Substrate for at least 4 kinases: EIF2AK1/HRI, EIF2AK2/PKR, EIF2AK3/PERK and EIF2AK4/GCN2. Phosphorylation on Ser-52 by the EIF2AK4/GCN2 protein kinase occurs in response to amino acid starvation and UV irradiation. Phosphorylation at Ser-52 by the EIF2AK3/PERK protein kinase occurs in response to the unfolded protein response. Phosphorylation at Ser-52 by EIF2AK1/HRI in response to mitochondrial damage promotes relocalization to the mitochondrial surface. In terms of processing, (Microbial infection) Phosphorylation by vaccinia virus protein E3 and rotavirus A stabilizes the eIF-2/GDP/eIF2B complex and prevents GDP/GTP exchange reaction, thus impairing the recycling of eIF-2 between successive rounds of initiation and leading to global inhibition of translation.

The protein localises to the cytoplasm. It is found in the stress granule. It localises to the cytosol. Its subcellular location is the mitochondrion. Its activity is regulated as follows. Activity is regulated by phosphorylation at Ser-49 and Ser-52, which stabilizes the eIF2/GDP/eIF2B complex and prevents the eIF2B-mediated exchange of GDP for GTP, thereby preventing the formation of the 43S pre-initiation complex (43S PIC). This results in the global attenuation of 5' cap-dependent protein synthesis and concomitant translation of ISR-specific mRNAs that contain a short upstream open reading frame (uORF) in their 5' UTR, such as ATF4, ATF5, DDIT3/CHOP and PPP1R15A/GADD34. In terms of biological role, member of the eIF2 complex that functions in the early steps of protein synthesis by forming a ternary complex with GTP and initiator tRNA. This complex binds to a 40S ribosomal subunit, followed by mRNA binding to form a 43S pre-initiation complex (43S PIC). Junction of the 60S ribosomal subunit to form the 80S initiation complex is preceded by hydrolysis of the GTP bound to eIF2 and release of an eIF2-GDP binary complex. In order for eIF2 to recycle and catalyze another round of initiation, the GDP bound to eIF2 must exchange with GTP by way of a reaction catalyzed by eIF2B. EIF2S1/eIF2-alpha is a key component of the integrated stress response (ISR), required for adaptation to various stress: phosphorylation by metabolic-stress sensing protein kinases (EIF2AK1/HRI, EIF2AK2/PKR, EIF2AK3/PERK and EIF2AK4/GCN2) in response to stress converts EIF2S1/eIF2-alpha in a global protein synthesis inhibitor, leading to an attenuation of cap-dependent translation, while concomitantly initiating the preferential translation of ISR-specific mRNAs, such as the transcriptional activators ATF4 and QRICH1, and hence allowing ATF4- and QRICH1-mediated reprogramming. EIF2S1/eIF2-alpha also acts as an activator of mitophagy in response to mitochondrial damage: phosphorylation by EIF2AK1/HRI promotes relocalization to the mitochondrial surface, thereby triggering PRKN-independent mitophagy. The chain is Eukaryotic translation initiation factor 2 subunit 1 from Homo sapiens (Human).